Reading from the N-terminus, the 497-residue chain is Angiopoietin-1 (497 aa).

Residues 1–15 (MTVFLSFAFLAAILT) form the signal peptide. N-linked (GlcNAc...) asparagine glycosylation is found at asparagine 92, asparagine 122, asparagine 154, asparagine 243, and asparagine 294. Residues 153 to 261 (LNQTSRLEIQ…LELMDTVHNL (109 aa)) are a coiled coil. The 221-residue stretch at 276-496 (KEEEKPFRDC…STTMMIRPLD (221 aa)) folds into the Fibrinogen C-terminal domain. Disulfide bonds link cysteine 285/cysteine 314 and cysteine 438/cysteine 451.

As to quaternary structure, homooligomer. Interacts with TEK/TIE2. Interacts with SVEP1/polydom. Interacts with THBD; this interaction significantly inhibits the generation of activated PC and TAFIa/CPB2 by the thrombin/thrombomodulin complex.

Its subcellular location is the secreted. Functionally, binds and activates TIE2 receptor by inducing its tyrosine phosphorylation. Implicated in endothelial developmental processes later and distinct from that of VEGF. Appears to play a crucial role in mediating reciprocal interactions between the endothelium and surrounding matrix and mesenchyme. Mediates blood vessel maturation/stability. It may play an important role in the heart early development. The polypeptide is Angiopoietin-1 (ANGPT1) (Bos taurus (Bovine)).